We begin with the raw amino-acid sequence, 138 residues long: Basic phospholipase A2 sistruxin B (138 aa).

The first 16 residues, 1–16 (MRALWIVAVLLVGVEG), serve as a signal peptide directing secretion. Cystine bridges form between cysteine 42–cysteine 131, cysteine 44–cysteine 60, cysteine 59–cysteine 111, cysteine 65–cysteine 138, cysteine 66–cysteine 104, cysteine 73–cysteine 97, and cysteine 91–cysteine 102. The Ca(2+) site is built by tyrosine 43, glycine 45, and glycine 47. Histidine 63 is an active-site residue. Aspartate 64 is a Ca(2+) binding site. Aspartate 105 is an active-site residue.

Heterodimer of an acidic subunit and a basic chain. The acidic subunit is non-toxic, without enzymatic activity and comprises 3 peptides that are cross-linked by 7 disulfide bridges. The basic subunit is toxic, has phospholipase A2 activity and is composed of a single chain. Requires Ca(2+) as cofactor. In terms of tissue distribution, expressed by the venom gland.

The protein resides in the secreted. It carries out the reaction a 1,2-diacyl-sn-glycero-3-phosphocholine + H2O = a 1-acyl-sn-glycero-3-phosphocholine + a fatty acid + H(+). Functionally, snake venom phospholipase A2 (PLA2) that shows presynaptic neurotoxicity. PLA2 catalyzes the calcium-dependent hydrolysis of the 2-acyl groups in 3-sn-phosphoglycerides. The chain is Basic phospholipase A2 sistruxin B from Sistrurus tergeminus (Western massasauga).